Reading from the N-terminus, the 147-residue chain is TASADQIQECFQIFDKDNDGKVSIEELGSALRSLGKNPTNAELNTIKGQLNAKEFDLATFKTVYRKPIKTPTEQSKEMLDAFRALDKEGNGTIQEAELRQLLLNLGDALTSSEVEELMKEVSVSGDGAINYESFVDMLVTGYPLASA.

The residue at position 1 (Thr1) is an N-acetylthreonine. 3 EF-hand domains span residues 2–37 (ASAD…LGKN), 73–108 (EQSK…LGDA), and 109–144 (LTSS…GYPL). Asp15, Asp17, Asp19, Lys21, Glu26, Asp86, Asn90, Thr92, and Glu97 together coordinate Ca(2+).

In Physarum polycephalum (Slime mold), this protein is Myosin regulatory light chain.